A 493-amino-acid chain; its full sequence is Probable cytosol aminopeptidase (493 aa).

Positions 265 and 270 each coordinate Mn(2+). Residue Lys-277 is part of the active site. Residues Asp-288, Asp-347, and Glu-349 each contribute to the Mn(2+) site. Arg-351 is an active-site residue.

This sequence belongs to the peptidase M17 family. Mn(2+) is required as a cofactor.

It localises to the cytoplasm. It carries out the reaction Release of an N-terminal amino acid, Xaa-|-Yaa-, in which Xaa is preferably Leu, but may be other amino acids including Pro although not Arg or Lys, and Yaa may be Pro. Amino acid amides and methyl esters are also readily hydrolyzed, but rates on arylamides are exceedingly low.. The catalysed reaction is Release of an N-terminal amino acid, preferentially leucine, but not glutamic or aspartic acids.. Presumably involved in the processing and regular turnover of intracellular proteins. Catalyzes the removal of unsubstituted N-terminal amino acids from various peptides. This is Probable cytosol aminopeptidase from Hydrogenovibrio crunogenus (strain DSM 25203 / XCL-2) (Thiomicrospira crunogena).